Reading from the N-terminus, the 1044-residue chain is Isoleucine--tRNA ligase (1044 aa).

Positions 48-58 (PFATGLPHFGH) match the 'HIGH' region motif. A 'KMSKS' region motif is present at residues 594-598 (KMSKS). Lysine 597 provides a ligand contact to ATP.

This sequence belongs to the class-I aminoacyl-tRNA synthetase family. IleS type 2 subfamily. As to quaternary structure, monomer. It depends on Zn(2+) as a cofactor.

Its subcellular location is the cytoplasm. It carries out the reaction tRNA(Ile) + L-isoleucine + ATP = L-isoleucyl-tRNA(Ile) + AMP + diphosphate. Functionally, catalyzes the attachment of isoleucine to tRNA(Ile). As IleRS can inadvertently accommodate and process structurally similar amino acids such as valine, to avoid such errors it has two additional distinct tRNA(Ile)-dependent editing activities. One activity is designated as 'pretransfer' editing and involves the hydrolysis of activated Val-AMP. The other activity is designated 'posttransfer' editing and involves deacylation of mischarged Val-tRNA(Ile). The protein is Isoleucine--tRNA ligase of Borrelia turicatae (strain 91E135).